The following is a 499-amino-acid chain: L-arabinose isomerase (499 aa).

Residues glutamate 306, glutamate 333, histidine 350, and histidine 449 each contribute to the Mn(2+) site.

The protein belongs to the arabinose isomerase family. Requires Mn(2+) as cofactor.

It catalyses the reaction beta-L-arabinopyranose = L-ribulose. It functions in the pathway carbohydrate degradation; L-arabinose degradation via L-ribulose; D-xylulose 5-phosphate from L-arabinose (bacterial route): step 1/3. In terms of biological role, catalyzes the conversion of L-arabinose to L-ribulose. This is L-arabinose isomerase from Aeromonas hydrophila subsp. hydrophila (strain ATCC 7966 / DSM 30187 / BCRC 13018 / CCUG 14551 / JCM 1027 / KCTC 2358 / NCIMB 9240 / NCTC 8049).